The primary structure comprises 148 residues: uncharacterized protein (148 aa).

This is an uncharacterized protein from Archaeoglobus fulgidus (strain ATCC 49558 / DSM 4304 / JCM 9628 / NBRC 100126 / VC-16).